Here is an 860-residue protein sequence, read N- to C-terminus: Leucine--tRNA ligase (860 aa).

Positions 42-52 (PYPSGRLHMGH) match the 'HIGH' region motif. The 'KMSKS' region motif lies at 619–623 (KMSKS). Residue Lys-622 coordinates ATP.

The protein belongs to the class-I aminoacyl-tRNA synthetase family.

Its subcellular location is the cytoplasm. The enzyme catalyses tRNA(Leu) + L-leucine + ATP = L-leucyl-tRNA(Leu) + AMP + diphosphate. The chain is Leucine--tRNA ligase from Salmonella paratyphi A (strain ATCC 9150 / SARB42).